Here is a 496-residue protein sequence, read N- to C-terminus: Cytochrome P450 71AV8 (496 aa).

Residues 3 to 23 (ISIPTTLGLAVIIFIIFKLLT) form a helical membrane-spanning segment. Position 432 (Cys432) interacts with heme.

This sequence belongs to the cytochrome P450 family. Heme serves as cofactor.

The protein localises to the membrane. Functionally, valencene oxidase, which preferentially hydroylates the C2 position of (+)-valencene in the trans-orientation, producing trans-nootkatol that can be further oxidized to (+)-nootkatone. Can also catalyze the three-step conversion of germacrene A to germacra-1(10),4,11(13)-trien-12-oic acid and the partial conversion of the non-natural substrate amorpha-4,11-diene into artemisinic alcohol and artemisinic aldehyde. The polypeptide is Cytochrome P450 71AV8 (CYP71AV8) (Cichorium intybus (Chicory)).